The sequence spans 843 residues: MPLSYQHFRKLLLLDDEAGPLEEELPRLADEGLNRRVAEDLNLGNLNVSIPWTHKVGNFTGLYSSTVPVFNPDWKTPSFPHIHLQEDIINRCQQYVGPLTVNEKRRLKLIMPARFYPNLTKYLPLDKGIKPYYPEYAVNHYFKTRHYLHTLWKAGILYKRETTRSASFCGSPYSWEQELQHGRLVFQTSTRHGDESFCSQSSGILSRSPVGPCVRSQLKQSRLGLQPQQGSLARGKSGRSGSIWSRVHPTTRRPFGVEPSGSGHIDNTASSTSSCLHQSAVRKTAYSHLSTSKRQSSSGHAVELHNIPPSSARSQSEGPIFSCWWLQFRNSKPCSDYCLTHIVNLLEDWGPCTEHGEHNIRIPRTPARVTGGVFLVDKNPHNTTESRLVVDFSQFSRGSTHVSWPKFAVPNLQSLTNLLSSNLSWLSLDVSAAFYHIPLHPAAMPHLLVGSSGLPRYVARLSSTSRNINYQHGTMQNLHDSCSRNLYVSLLLLYKTFGRKLHLYSHPIILGFRKIPMGVGLSPFLLAQFTSAICSVVRRAFPHCLAFSYMDDVVLGAKSVQHLESLFTSITNFLLSLGIHLNPNKTKRWGYSLNFMGYVIGSWGTLPQEHIVQKLKQCFRKLPVNRPIDWKVCQRIVGLLGFAAPFTQCGYPALMPLYACIQSKQAFTFSPTYKAFLCKQYLNLYPVARQRSGLCQVFADATPTGWGLAIGHRRMRGTFVAPLPIHTAELLAACFARSRSGAKLIGTDNSVVLSRKYTSFPWLLGCAANWILRGTSFVYVPSALNPADDPSRGRLGLYRPLLHLPFRPTTGRTSLYAVSPSVPSHLPDRVHFASPLHVAWRPP.

The segment at 1 to 177 (MPLSYQHFRK…FCGSPYSWEQ (177 aa)) is terminal protein domain (TP). Residues 178 to 346 (ELQHGRLVFQ…YCLTHIVNLL (169 aa)) are spacer. 2 disordered regions span residues 224–273 (GLQP…SSTS) and 288–316 (HLST…RSQS). Residues 288–299 (HLSTSKRQSSSG) show a composition bias toward polar residues. Residues 347 to 690 (EDWGPCTEHG…YLNLYPVARQ (344 aa)) form a polymerase/reverse transcriptase domain (RT) region. A Reverse transcriptase domain is found at 357 to 600 (EHNIRIPRTP…YSLNFMGYVI (244 aa)). Mg(2+)-binding residues include Asp-429, Asp-551, and Asp-552.

Belongs to the hepadnaviridae P protein family.

It carries out the reaction DNA(n) + a 2'-deoxyribonucleoside 5'-triphosphate = DNA(n+1) + diphosphate. It catalyses the reaction Endonucleolytic cleavage to 5'-phosphomonoester.. Activated by host HSP70 and HSP40 in vitro to be able to bind the epsilon loop of the pgRNA. Because deletion of the RNase H region renders the protein partly chaperone-independent, the chaperones may be needed indirectly to relieve occlusion of the RNA-binding site by this domain. Inhibited by several reverse-transcriptase inhibitors: Lamivudine, Adefovir and Entecavir. In terms of biological role, multifunctional enzyme that converts the viral RNA genome into dsDNA in viral cytoplasmic capsids. This enzyme displays a DNA polymerase activity that can copy either DNA or RNA templates, and a ribonuclease H (RNase H) activity that cleaves the RNA strand of RNA-DNA heteroduplexes in a partially processive 3'- to 5'-endonucleasic mode. Neo-synthesized pregenomic RNA (pgRNA) are encapsidated together with the P protein, and reverse-transcribed inside the nucleocapsid. Initiation of reverse-transcription occurs first by binding the epsilon loop on the pgRNA genome, and is initiated by protein priming, thereby the 5'-end of (-)DNA is covalently linked to P protein. Partial (+)DNA is synthesized from the (-)DNA template and generates the relaxed circular DNA (RC-DNA) genome. After budding and infection, the RC-DNA migrates in the nucleus, and is converted into a plasmid-like covalently closed circular DNA (cccDNA). The activity of P protein does not seem to be necessary for cccDNA generation, and is presumably released from (+)DNA by host nuclear DNA repair machinery. This Homo sapiens (Human) protein is Protein P.